Consider the following 493-residue polypeptide: Glutamyl-tRNA(Gln) amidotransferase subunit A (493 aa).

Active-site charge relay system residues include K79 and S159. S183 acts as the Acyl-ester intermediate in catalysis.

The protein belongs to the amidase family. GatA subfamily. In terms of assembly, heterotrimer of A, B and C subunits.

It carries out the reaction L-glutamyl-tRNA(Gln) + L-glutamine + ATP + H2O = L-glutaminyl-tRNA(Gln) + L-glutamate + ADP + phosphate + H(+). Its function is as follows. Allows the formation of correctly charged Gln-tRNA(Gln) through the transamidation of misacylated Glu-tRNA(Gln) in organisms which lack glutaminyl-tRNA synthetase. The reaction takes place in the presence of glutamine and ATP through an activated gamma-phospho-Glu-tRNA(Gln). The protein is Glutamyl-tRNA(Gln) amidotransferase subunit A of Brucella abortus (strain S19).